Consider the following 249-residue polypeptide: Caffeoyl-CoA O-methyltransferase (249 aa).

Lysine 21 is a binding site for substrate. Residues threonine 63, glutamate 85, glycine 87 to valine 88, serine 93, aspartate 111, and alanine 140 each bind S-adenosyl-L-methionine. Aspartate 162 provides a ligand contact to substrate. Aspartate 162 is a binding site for a divalent metal cation. Position 164 (aspartate 164) interacts with S-adenosyl-L-methionine. Residues aspartate 188 and asparagine 189 each coordinate a divalent metal cation. Position 193 (asparagine 193) interacts with substrate.

The protein belongs to the class I-like SAM-binding methyltransferase superfamily. Cation-dependent O-methyltransferase family. CCoAMT subfamily. As to quaternary structure, homodimer. It depends on a divalent metal cation as a cofactor.

It carries out the reaction (E)-caffeoyl-CoA + S-adenosyl-L-methionine = (E)-feruloyl-CoA + S-adenosyl-L-homocysteine + H(+). It participates in aromatic compound metabolism; phenylpropanoid biosynthesis. Methylates caffeoyl-CoA to feruloyl-CoA and 5-hydroxyferuloyl-CoA to sinapoyl-CoA. Plays a role in the synthesis of feruloylated polysaccharides. Involved in the reinforcement of the plant cell wall. Also involved in the responding to wounding or pathogen challenge by the increased formation of cell wall-bound ferulic acid polymers. The chain is Caffeoyl-CoA O-methyltransferase from Eucalyptus gunnii (Cider gum).